Consider the following 626-residue polypeptide: ATP-dependent zinc metalloprotease FtsH (626 aa).

Topologically, residues 1–5 (MNFRN) are cytoplasmic. Residues 6–26 (LAIWLVIVAVLGGVFVVSQNS) form a helical membrane-spanning segment. Residues 27-98 (RTKSSSEISY…DVKFKSGSIS (72 aa)) are Periplasmic-facing. The helical transmembrane segment at 99-119 (FLAILVQLLPILLVVGVWLFL) threads the bilayer. The Cytoplasmic portion of the chain corresponds to 120–626 (MRQMQGGAKG…SPGAGASVTA (507 aa)). Residue 191-198 (GPPGTGKT) coordinates ATP. H413 provides a ligand contact to Zn(2+). The active site involves E414. The Zn(2+) site is built by H417 and D491.

In the central section; belongs to the AAA ATPase family. This sequence in the C-terminal section; belongs to the peptidase M41 family. In terms of assembly, homohexamer. The cofactor is Zn(2+).

The protein localises to the cell inner membrane. Its function is as follows. Acts as a processive, ATP-dependent zinc metallopeptidase for both cytoplasmic and membrane proteins. Plays a role in the quality control of integral membrane proteins. Functionally, absence of FtsH leads to increased sigma-32 levels, which suggests, in analogy to E.coli, that sigma-32 is a substrate for FtsH. May play a role in the general stress response, as overexpression leads to improved resistance to salt stress. This is ATP-dependent zinc metalloprotease FtsH from Caulobacter vibrioides (strain NA1000 / CB15N) (Caulobacter crescentus).